The chain runs to 183 residues: MMVQHLKRRPLSRYLKDFKHSQTHCAHCRKLLDRITLVRDGKIVNKIEISRLDTLLDENGWQTEQKSWAALCRFCGDLHCKTQSDFFDIIGFKQFLFEQTEMSPGTVREYVVRLRRLGNHLHEQNISLDQLQDGFLDEILAPWLPTTSTNNYRIALRKYQHYQRQTCTRLVQKSSSLPSSDIY.

During the post-exponential growth phase transiently interferes with RpoS (sigma S) activity without affecting expression of RpoS itself. It is probably not an anti-sigma factor as its overexpression is detrimental in rapidly growing cells where there is almost no sigma S factor. There is a strong overlap between Crl-activated genes and FliZ-down-regulated genes. FliZ acts as a timing device for expression of the genes for the adhesive curli fimbriae by indirectly decreasing expression of the curli regulator CsgD. The polypeptide is Regulator of sigma S factor FliZ (fliZ) (Escherichia coli (strain K12)).